The sequence spans 41 residues: MKIKNSLKALKARHRDNQLVRRKGRVYIINKTAPRYKARQG.

It belongs to the bacterial ribosomal protein bL36 family.

This Mesorhizobium japonicum (strain LMG 29417 / CECT 9101 / MAFF 303099) (Mesorhizobium loti (strain MAFF 303099)) protein is Large ribosomal subunit protein bL36.